Reading from the N-terminus, the 445-residue chain is MIELYDSYSQESRDLHESLGATGLSQLGVVIDADGFLPDGLLSPFTYYLGYEDGKPLYFNQVPVSDFWEILGDNQSACIEDVTQERAVIHYADGMQARLVKQVDWKDLEGRVRQVDHYNRFGACFATTTYSADSEPIMTVYQDVNGQQVLLENHVTGDILLTLPGQSMRYFANKVEFITFFLQDLEIDTSQLIFNTLATPFLVSFHHPDKSGSDVLVWQEPLYDAIPGNMQLILESDNVRTKKIIIPNKATYERALELTDEKYHDQFVHLGYHYQFKRDNFLRRDALILTNSDQIEQVEAIAGALPDVTFRIAAVTEMSSKLLDMLCYPNVALYQNASPQKIQELYQLSDIYLDINHSNELLQAVRQAFEHNLLILGFNQTVHNRLYIAPDHLFESSEVAALVETIKLALSDVDQMRQALGKQGQHANYVDLVRYQETMQTVLGG.

A glycosyltransferase 1 region spans residues 55-171 (KPLYFNQVPV…TLPGQSMRYF (117 aa)).

It belongs to the GtfB family. In terms of assembly, interacts with glycosyltransferase GtfA; probably forms a heterotetramer with 2 subunits each of GtfA and GtfB. Part of the accessory SecA2/SecY2 protein translocation apparatus.

It is found in the cell membrane. The protein operates within protein modification; protein glycosylation. Functionally, required for the polymorphic O-glycosylation of the serine-rich repeat protein PsrP. A stabilizing protein that is part of the accessory SecA2/SecY2 system specifically required to export serine-rich repeat cell wall proteins encoded upstream in the same operon. The GtfA-GtfB complex adds GlcNAc from UDP-GlcNAc to PsrP, attaching the first sugar residue. Stabilizes the glycosylation activity of GtfA. Has no N-acetylglucosaminyl transferase activity on its own. In Streptococcus pneumoniae serotype 4 (strain ATCC BAA-334 / TIGR4), this protein is UDP-N-acetylglucosamine--peptide N-acetylglucosaminyltransferase stabilizing protein GtfB.